A 37-amino-acid chain; its full sequence is Disintegrin morulustatin (37 aa).

Intrachain disulfides connect Cys12–Cys16, Cys22–Cys36, and Cys24–Cys31.

It belongs to the venom metalloproteinase (M12B) family. P-II subfamily. P-IIa sub-subfamily. In terms of tissue distribution, expressed by the venom gland.

It is found in the secreted. Functionally, inhibits ADP-induced platelet aggregation in human whole blood in a concentration-dependent manner (IC(50)=89.5 nM). This is Disintegrin morulustatin from Crotalus morulus (Tamaulipan rock rattlesnake).